Consider the following 286-residue polypeptide: 4-diphosphocytidyl-2-C-methyl-D-erythritol kinase (286 aa).

Residue K11 is part of the active site. An ATP-binding site is contributed by 94–104; that stretch reads PMGGGIGGGSS. Residue D136 is part of the active site.

Belongs to the GHMP kinase family. IspE subfamily.

It catalyses the reaction 4-CDP-2-C-methyl-D-erythritol + ATP = 4-CDP-2-C-methyl-D-erythritol 2-phosphate + ADP + H(+). It participates in isoprenoid biosynthesis; isopentenyl diphosphate biosynthesis via DXP pathway; isopentenyl diphosphate from 1-deoxy-D-xylulose 5-phosphate: step 3/6. Functionally, catalyzes the phosphorylation of the position 2 hydroxy group of 4-diphosphocytidyl-2C-methyl-D-erythritol. The sequence is that of 4-diphosphocytidyl-2-C-methyl-D-erythritol kinase from Pseudomonas putida (strain ATCC 700007 / DSM 6899 / JCM 31910 / BCRC 17059 / LMG 24140 / F1).